A 381-amino-acid chain; its full sequence is Erythronate-4-phosphate dehydrogenase (381 aa).

Substrate is bound by residues Ser45 and Thr66. Positions 146 and 173 each coordinate NAD(+). Arg206 is a catalytic residue. Residue Asp230 participates in NAD(+) binding. Residue Glu235 is part of the active site. His252 functions as the Proton donor in the catalytic mechanism. Residue Gly255 coordinates NAD(+). Substrate is bound at residue Tyr256.

The protein belongs to the D-isomer specific 2-hydroxyacid dehydrogenase family. PdxB subfamily. As to quaternary structure, homodimer.

The protein localises to the cytoplasm. It catalyses the reaction 4-phospho-D-erythronate + NAD(+) = (R)-3-hydroxy-2-oxo-4-phosphooxybutanoate + NADH + H(+). It functions in the pathway cofactor biosynthesis; pyridoxine 5'-phosphate biosynthesis; pyridoxine 5'-phosphate from D-erythrose 4-phosphate: step 2/5. Functionally, catalyzes the oxidation of erythronate-4-phosphate to 3-hydroxy-2-oxo-4-phosphonooxybutanoate. The polypeptide is Erythronate-4-phosphate dehydrogenase (Hahella chejuensis (strain KCTC 2396)).